A 475-amino-acid chain; its full sequence is MHGGVGHTDEGKLWGARFAGGPSPELAALSASTHFDWALAAYDLAGSRAHAAALAACGYLTDDELAGMLAALDRLDEDVASGAFAAAETDEDVHGALERGLIERAGADLGGKLRAGRSRNDQIATLVRLYLRDHAGVIAERLIALVDAIAAQAEAHPTTILPGRTHLQHAQPVLLAHHLLAHCWPLVRDLERLADWDKRANVSPYGGGALAGSTLGLDPLLVARELGFAASSENSIDGTAARDVVAEFVFIAAQIGVDLSRFAEEIILWNTREFGFVTLDDSYSTGSSIMPQKKNPDIAELARGKSGRLIGNLTGLLTTLKGLPLAYNRDLQEDKEPVFDSVQTLEVVLPAFAGMVATLRFHTDRMAELAPQGFSLATDVAEWLVKRHVPFRVAHELTGSLVRFAEENGLELHEVSDGQFAAISPLLTPDVRTVLTVEGSVASRAGAGGTAPERVAEQLAALTGRVRSLAARREL.

The protein belongs to the lyase 1 family. Argininosuccinate lyase subfamily.

The protein localises to the cytoplasm. The enzyme catalyses 2-(N(omega)-L-arginino)succinate = fumarate + L-arginine. The protein operates within amino-acid biosynthesis; L-arginine biosynthesis; L-arginine from L-ornithine and carbamoyl phosphate: step 3/3. The chain is Argininosuccinate lyase from Leifsonia xyli subsp. xyli (strain CTCB07).